The chain runs to 316 residues: Phosphatidylinositol mannoside acyltransferase (316 aa).

Residue His137 is the Proton acceptor of the active site. His137 and Arg175 together coordinate hexadecanoyl-CoA. Glu211 is a catalytic residue. Residue Glu240 participates in hexadecanoyl-CoA binding.

Belongs to the LpxL/LpxM/LpxP family.

The protein resides in the cell inner membrane. The enzyme catalyses a 2,6-O-bis(alpha-D-mannopyranosyl)-1-phosphatidyl-1D-myo-inositol + an acyl-CoA = a 2-O-(alpha-D-mannosyl)-6-O-(6-O-acyl-alpha-D-mannosyl)-1-phosphatidyl-1D-myo-inositol + CoA. It catalyses the reaction a 1,2-diacyl-sn-glycero-3-phospho-[alpha-D-mannopyranosyl-(1&lt;-&gt;6)-D-myo-inositol] + an acyl-CoA = a 1,2-diacyl-sn-glycero-3-phospho-[alpha-D-6-acyl-mannopyranosyl-(1&lt;-&gt;6)-D-myo-inositol] + CoA. The protein operates within phospholipid metabolism; phosphatidylinositol metabolism. Its function is as follows. Catalyzes the transfer of a palmitoyl moiety from palmitoyl-CoA to the 6-position of the mannose ring linked to the 2-position of myo-inositol in phosphatidyl-myo-inositol monomannoside (PIM1) or dimannoside (PIM2). Essential for growth and survival in axenic cultures and during macrophage infection and in a mouse model of infection. This is Phosphatidylinositol mannoside acyltransferase from Mycobacterium tuberculosis (strain ATCC 25618 / H37Rv).